A 1109-amino-acid chain; its full sequence is Protein argonaute 3 (1109 aa).

Residues 1-13 show a composition bias toward basic and acidic residues; that stretch reads MAGRGGRDPRRGY. 2 disordered regions span residues 1–83 and 125–220; these read MAGR…GLVR and DHRD…PLSK. Composition is skewed to gly residues over residues 14–30, 37–54, and 62–83; these read DGGYGYPRGGGGQGGTN, RGGGRNGPRGGRFPGGRG, and DVLGGGQGGGRGTTAGAGGLVR. Over residues 125 to 134 the composition is skewed to basic and acidic residues; that stretch reads DHRDQHDHQS. The segment covering 135–161 has biased composition (basic residues); sequence QRHHHRHHHHQRQRHHHHHQRQQRRGS. The 111-residue stretch at 411 to 521 folds into the PAZ domain; sequence SVLDLVKTMK…VPIEFCNIPE (111 aa). Positions 527-545 are enriched in basic and acidic residues; that stretch reads VARLDDKKSDNKGEQEKPS. The segment at 527–548 is disordered; the sequence is VARLDDKKSDNKGEQEKPSTKT. The Piwi domain maps to 720–1023; sequence LLFCPMLNRC…AAYRGRLYYE (304 aa).

Belongs to the argonaute family. Ago subfamily.

Functionally, probably involved in the RNA silencing pathway. May bind to short RNAs such as microRNAs (miRNAs) or short interfering RNAs (siRNAs), and represses the translation of mRNAs which are complementary to them. This is Protein argonaute 3 (AGO3) from Oryza sativa subsp. japonica (Rice).